Reading from the N-terminus, the 133-residue chain is Binder of sperm protein homolog 1 (133 aa).

The N-terminal stretch at 1–20 (MAQPLDFLLVSICLFHSLFS) is a signal peptide. 2 Fibronectin type-II domains span residues 40 to 84 (TEDG…YCAL) and 85 to 133 (SDYA…YCIE). Disulfide bonds link Cys45–Cys69, Cys59–Cys82, Cys90–Cys116, and Cys104–Cys131. Residue Asn72 is glycosylated (N-linked (GlcNAc...) asparagine).

The protein belongs to the seminal plasma protein family. In terms of tissue distribution, expressed only in the epididymis.

The protein localises to the secreted. Binds sperm in vitro and promotes sperm capacitation. Specifically promotes capacitation induced by high density lipoproteins (HDLs). Also binds heparin, phospholipid liposomes, and weakly to gelatin. Does not bind chondroitin sulfate B. The chain is Binder of sperm protein homolog 1 (Bsph1) from Mus musculus (Mouse).